A 351-amino-acid chain; its full sequence is Peroxidase C1B (351 aa).

Residues 1 to 28 (MHSPSSTSFTWILITLGCLAFYASLSDA) form the signal peptide. 4 cysteine pairs are disulfide-bonded: Cys-39/Cys-119, Cys-72/Cys-77, Cys-125/Cys-329, and Cys-205/Cys-237. Asn-41 carries N-linked (GlcNAc...) asparagine glycosylation. The active-site Proton acceptor is His-70. Asp-71, Val-74, Gly-76, Asp-78, and Ser-80 together coordinate Ca(2+). The N-linked (GlcNAc...) asparagine glycan is linked to Asn-85. Residue Pro-167 coordinates substrate. His-198 contributes to the heme b binding site. Thr-199 lines the Ca(2+) pocket. 3 N-linked (GlcNAc...) asparagine glycosylation sites follow: Asn-214, Asn-226, and Asn-242. Residues Asp-250, Thr-253, and Asp-258 each coordinate Ca(2+). Asn-283 carries an N-linked (GlcNAc...) asparagine glycan.

This sequence belongs to the peroxidase family. Classical plant (class III) peroxidase subfamily. It depends on Ca(2+) as a cofactor. Requires heme b as cofactor.

It localises to the secreted. The protein localises to the vacuole. The enzyme catalyses 2 a phenolic donor + H2O2 = 2 a phenolic radical donor + 2 H2O. Functionally, removal of H(2)O(2), oxidation of toxic reductants, biosynthesis and degradation of lignin, suberization, auxin catabolism, response to environmental stresses such as wounding, pathogen attack and oxidative stress. These functions might be dependent on each isozyme/isoform in each plant tissue. This chain is Peroxidase C1B (PRXC1B), found in Armoracia rusticana (Horseradish).